The following is a 1548-amino-acid chain: Dicer-like protein 1 (1548 aa).

The segment covering 1–41 (MGDPAAHEMADLERGFSSEDDAEYRSGDDEASKFVENEPSK) has biased composition (basic and acidic residues). Residues 1–48 (MGDPAAHEMADLERGFSSEDDAEYRSGDDEASKFVENEPSKRGKISQK) are disordered. The region spanning 106–289 (LFERAKQQNT…QAAIELEGLL (184 aa)) is the Helicase ATP-binding domain. 119–126 (LDTGSGKT) serves as a coordination point for ATP. The DEAH box motif lies at 232–235 (DEAH). The Helicase C-terminal domain occupies 428 to 589 (TLSKLLEEYF…FCNTQPEDRL (162 aa)). Residues 624–718 (SLPILQAFLN…RSKFVEKRHV (95 aa)) form the Dicer dsRNA-binding fold domain. The PAZ domain occupies 871–1006 (PLLRHVADRD…FVLEPMRISP (136 aa)). RNase III domains lie at 1051–1197 (LTKD…MTTR) and 1248–1411 (AQKI…VDSK). Mg(2+) is bound by residues Glu-1288, Asp-1397, and Glu-1400. Residues 1445-1518 (TFFTQYVFET…ARKALDKLRS (74 aa)) enclose the DRBM domain. Cys-1457, His-1489, Cys-1530, and Cys-1532 together coordinate Zn(2+).

It belongs to the helicase family. Dicer subfamily. Mg(2+) is required as a cofactor. Requires Mn(2+) as cofactor.

Dicer-like endonuclease involved in cleaving double-stranded RNA in the RNA interference (RNAi) pathway. Produces 21 to 25 bp dsRNAs (siRNAs) which target the selective destruction of homologous RNAs leading to sequence-specific suppression of gene expression, called post-transcriptional gene silencing (PTGS). Part of a broad host defense response against viral infection and transposons. This is Dicer-like protein 1 (DCL-1) from Cryphonectria parasitica (Chestnut blight fungus).